The chain runs to 184 residues: Thiosulfate dehydrogenase [quinone] large subunit (184 aa).

Transmembrane regions (helical) follow at residues 21 to 38, 86 to 106, 109 to 129, and 137 to 157; these read LFPVRFAVGWMFLDGGLR, FLTVFSYIEIIAGLFIIIGLL, LAALGALAMSVGFAPAYWLGS, and IGALLTAGSVTLMLTAAGRVW.

As to quaternary structure, heterodimer of a large and a small subunit in a 2:2 stoichiometry. TQO may associate with the terminal oxidase formed by doxBCE.

The protein localises to the cell membrane. It catalyses the reaction 6-decylubiquinone + 2 thiosulfate = 6-decylubiquinol + tetrathionate. With respect to regulation, inhibited by sulfite, metabisulfite and dithonite. Its function is as follows. TQO plays a role in sulfur oxidation and is proposed to couple sulfur oxidation to dioxygen reduction; caldariellaquinone or sulfolobus quinone seem to serve to transfer electrons to the electron transport chain terminal oxidase formed by DoxBCE. The chain is Thiosulfate dehydrogenase [quinone] large subunit (doxD) from Acidianus ambivalens (Desulfurolobus ambivalens).